We begin with the raw amino-acid sequence, 164 residues long: MGKIGIFFGTDSGNAEAIAEKISKAIGNAEVVDVAKASKEQFNSFTKVILVAPTAGAGDLQTDWEDFLGTLEASDFATKTIGLVGLGDQDTYSETFAEGIFHIYEKAKAGKVVGQTPTDGYHFEASKAVEGGKFVGLVIDEDNQDDLTDERISKWVEQVKGSFA.

Residues 4-160 enclose the Flavodoxin-like domain; that stretch reads IGIFFGTDSG…RISKWVEQVK (157 aa).

It belongs to the flavodoxin family. FMN serves as cofactor.

Its function is as follows. Low-potential electron donor to a number of redox enzymes. This Helicobacter pylori (strain ATCC 700392 / 26695) (Campylobacter pylori) protein is Flavodoxin (fldA).